The following is a 120-amino-acid chain: Ribosome-binding factor A (120 aa).

It belongs to the RbfA family. In terms of assembly, monomer. Binds 30S ribosomal subunits, but not 50S ribosomal subunits or 70S ribosomes.

It is found in the cytoplasm. Functionally, one of several proteins that assist in the late maturation steps of the functional core of the 30S ribosomal subunit. Associates with free 30S ribosomal subunits (but not with 30S subunits that are part of 70S ribosomes or polysomes). Required for efficient processing of 16S rRNA. May interact with the 5'-terminal helix region of 16S rRNA. This Verminephrobacter eiseniae (strain EF01-2) protein is Ribosome-binding factor A.